The primary structure comprises 841 residues: Potassium transport protein 1 (841 aa).

The next 2 membrane-spanning stretches (helical) occupy residues 24 to 44 (YIYI…GGTT) and 80 to 100 (ILYG…ISFI). Asn116 and Asn164 each carry an N-linked (GlcNAc...) asparagine glycan. Residues 173–192 (STNNPYFPDNPPSPKADISK) form a disordered region. N-linked (GlcNAc...) asparagine glycosylation is found at Asn215 and Asn401. The next 7 membrane-spanning stretches (helical) occupy residues 469-489 (MVTL…IVFA), 507-527 (GWWA…SLIP), 537-557 (IFLL…FPCF), 600-620 (WVLF…FMVL), 662-682 (AVLV…AINM), 715-735 (LSYD…CEGG), and 747-767 (IFTV…STGL). Residue Asn771 is glycosylated (N-linked (GlcNAc...) asparagine).

It belongs to the TrkH potassium transport family.

Its subcellular location is the cell membrane. Its function is as follows. Together with TRK2, defines the major, high-affinity potassium influx transport system. Involved in maintenance of the proper sodium/potassium ratio in the cell and in regulating the plasma membrane potential. This chain is Potassium transport protein 1 (trk1), found in Schizosaccharomyces pombe (strain 972 / ATCC 24843) (Fission yeast).